Consider the following 439-residue polypeptide: Methylenetetrahydrofolate--tRNA-(uracil-5-)-methyltransferase TrmFO (439 aa).

Residue 7–12 participates in FAD binding; it reads GAGLAG.

Belongs to the MnmG family. TrmFO subfamily. FAD serves as cofactor.

The protein localises to the cytoplasm. It catalyses the reaction uridine(54) in tRNA + (6R)-5,10-methylene-5,6,7,8-tetrahydrofolate + NADH + H(+) = 5-methyluridine(54) in tRNA + (6S)-5,6,7,8-tetrahydrofolate + NAD(+). The catalysed reaction is uridine(54) in tRNA + (6R)-5,10-methylene-5,6,7,8-tetrahydrofolate + NADPH + H(+) = 5-methyluridine(54) in tRNA + (6S)-5,6,7,8-tetrahydrofolate + NADP(+). In terms of biological role, catalyzes the folate-dependent formation of 5-methyl-uridine at position 54 (M-5-U54) in all tRNAs. The protein is Methylenetetrahydrofolate--tRNA-(uracil-5-)-methyltransferase TrmFO of Heliobacterium modesticaldum (strain ATCC 51547 / Ice1).